The sequence spans 639 residues: Splicing factor 1 (639 aa).

Disordered regions lie at residues 1 to 42 (MATG…VIPP) and 65 to 94 (LRTG…GKRL). Position 2 is an N-acetylalanine (Ala-2). Position 14 is a phosphoserine (Ser-14). A Nuclear localization signal motif is present at residues 15 to 19 (KKRKR). The residue at position 20 (Ser-20) is a Phosphoserine; by PKG. A phosphoserine mark is found at Ser-80 and Ser-82. Tyr-87 carries the phosphotyrosine modification. Position 89 is a phosphoserine (Ser-89). The 82-residue stretch at 141–222 (MIPQDEYPEI…ENVKKAVEQI (82 aa)) folds into the KH domain. Residues 277 to 296 (TVCTKCGGAGHIASDCKFQR) form a CCHC-type zinc finger. Residues 325-639 (VPASVGSTSG…PAPPPPPPQN (315 aa)) are disordered. A compositionally biased stretch (low complexity) spans 335 to 350 (PATTPLASAPRPAAPA). Over residues 382–394 (MHGGGPGGPGGGP) the composition is skewed to gly residues. The segment covering 418–447 (NGPPPPWMQPPPPPMNQGPHPPGHHGPPPM) has biased composition (pro residues). Position 463 is a phosphoserine (Leu-463). Residue Lys-467 is modified to Omega-N-methylarginine. Positions 470-499 (MPPPPMGMMPPPPPPPSGQPPPPPSGPLPP) are enriched in pro residues. Low complexity-rich tracts occupy residues 515–534 (SSMA…TTTT) and 542–566 (PPWQ…NPTM). Pro residues-rich tracts occupy residues 567–591 (VPLP…PPPG) and 598–608 (APPPPPPPPMD). Low complexity predominate over residues 615–625 (MMGMGVAGMPP). A compositionally biased stretch (pro residues) spans 626–639 (FGMPPAPPPPPPQN).

This sequence belongs to the BBP/SF1 family. In terms of assembly, binds U2AF2. Interacts with U1 snRNA. Binds EWSR1, FUS and TAF15. Interacts with RBM17. Phosphorylation on Ser-20 interferes with U2AF2 binding and spliceosome assembly. Isoform 6 is phosphorylated on Ser-463. Detected in lung, ovary, adrenal gland, colon, kidney, muscle, pancreas, thyroid, placenta, brain, liver and heart.

The protein localises to the nucleus. In terms of biological role, necessary for the ATP-dependent first step of spliceosome assembly. Binds to the intron branch point sequence (BPS) 5'-UACUAAC-3' of the pre-mRNA. May act as transcription repressor. This is Splicing factor 1 (SF1) from Homo sapiens (Human).